A 570-amino-acid chain; its full sequence is Probable glucomannan 4-beta-mannosyltransferase 11 (570 aa).

The chain crosses the membrane as a helical span at residues 57-77 (LAMTVMILAEKLFVAAVCLAV). The active site involves D157. The substrate site is built by D216 and D218. D310 is a catalytic residue. 4 helical membrane passes run 389 to 409 (IAAH…SVWL), 412 to 432 (IEIP…CKAV), 522 to 542 (YSEI…VLYA), and 548 to 568 (IFLF…IGVC).

Belongs to the glycosyltransferase 2 family. Plant cellulose synthase-like A subfamily.

The protein resides in the golgi apparatus membrane. The catalysed reaction is GDP-mannose + (glucomannan)n = GDP + (glucomannan)n+1.. Functionally, probable mannan synthase which consists of a 4-beta-mannosyltransferase activity on mannan using GDP-mannose. The beta-1,4-mannan product is the backbone for galactomannan synthesis by galactomannan galactosyltransferase. Galactomannan is a noncellulosic polysaccharides of plant cell wall. This Oryza sativa subsp. japonica (Rice) protein is Probable glucomannan 4-beta-mannosyltransferase 11.